The following is a 271-amino-acid chain: 2-amino-3,7-dideoxy-D-threo-hept-6-ulosonate synthase (271 aa).

Catalysis depends on aspartate 33, which acts as the Proton acceptor. 1-deoxy-D-threo-hexo-2,5-diulose 6-phosphate-binding positions include 33–37 (DHGVS) and 153–155 (YPR). The Proton donor role is filled by tyrosine 153. Lysine 184 (schiff-base intermediate with substrate) is an active-site residue. Residues 209–210 (GG) and 236–237 (GR) each bind 1-deoxy-D-threo-hexo-2,5-diulose 6-phosphate.

Belongs to the DeoC/FbaB aldolase family. ADHS subfamily. As to quaternary structure, homodecamer.

The enzyme catalyses 1-deoxy-D-threo-hexo-2,5-diulose 6-phosphate + L-aspartate 4-semialdehyde = 2,3-dioxopropyl phosphate + 2-amino-2,3,7-trideoxy-D-lyxo-hept-6-ulosonate. In terms of biological role, catalyzes a transaldol reaction between 6-deoxy-5-ketofructose 1-phosphate (DKFP) and L-aspartate semialdehyde (ASA) with an elimination of hydroxypyruvaldehyde phosphate to yield 2-amino-3,7-dideoxy-D-threo-hept-6-ulosonate (ADH). Plays a key role in an alternative pathway of the biosynthesis of 3-dehydroquinate (DHQ), which is involved in the canonical pathway for the biosynthesis of aromatic amino acids. This chain is 2-amino-3,7-dideoxy-D-threo-hept-6-ulosonate synthase, found in Methanococcus aeolicus (strain ATCC BAA-1280 / DSM 17508 / OCM 812 / Nankai-3).